The following is a 202-amino-acid chain: Casparian strip membrane protein 1 (202 aa).

Polar residues predominate over residues 1 to 13; it reads MEKSESSTIQIAE. Residues 1-30 are disordered; that stretch reads MEKSESSTIQIAESSKDRKGKAPLLPPPVH. The Cytoplasmic segment spans residues 1–42; the sequence is MEKSESSTIQIAESSKDRKGKAPLLPPPVHHERAAGYKRGVA. Residues 43–63 form a helical membrane-spanning segment; that stretch reads IFDLILRISAATAALAATIVM. Topologically, residues 64 to 90 are extracellular; the sequence is GTTEQTLPFFTQFFQFRASYDDLPTFT. Residues 91-111 form a helical membrane-spanning segment; it reads FFVIAMAIVTGYLILSVPFSI. Residues 112–130 are Cytoplasmic-facing; it reads VCIARPVVAAPRILLILCD. A helical membrane pass occupies residues 131 to 151; it reads TLTVTLATSAAGASAAIVYLA. The Extracellular segment spans residues 152-177; the sequence is HNGXSDANWLAICQQFNDFCQRVSGA. The helical transmembrane segment at 178 to 198 threads the bilayer; that stretch reads VVAAFVSAVLLIFLVVLSAIV. Residues 199 to 202 are Cytoplasmic-facing; sequence LKKH.

It belongs to the Casparian strip membrane proteins (CASP) family. In terms of assembly, homodimer and heterodimers.

Its subcellular location is the cell membrane. Regulates membrane-cell wall junctions and localized cell wall deposition. Required for establishment of the Casparian strip membrane domain (CSD) and the subsequent formation of Casparian strips, a cell wall modification of the root endodermis that determines an apoplastic barrier between the intraorganismal apoplasm and the extraorganismal apoplasm and prevents lateral diffusion. The sequence is that of Casparian strip membrane protein 1 from Triphysaria pusilla (Dwarf owl's-clover).